Consider the following 469-residue polypeptide: Protein RUFY3 (469 aa).

Phosphothreonine is present on residues T5 and T12. Y27, S34, and S49 each carry phosphoserine. T51 is modified (phosphothreonine). D53 is subject to Phosphoserine. In terms of domain architecture, RUN spans 95–227; that stretch reads DSDYAPLQQF…IDANFCMKGE (133 aa). Coiled coils occupy residues 271–362 and 422–463; these read NRHL…VEKE and KSEL…AANK. Over residues 321-337 the composition is skewed to basic and acidic residues; that stretch reads SYLLESNRKGPKQDRTA. Positions 321–342 are disordered; it reads SYLLESNRKGPKQDRTAEGQAL.

In terms of assembly, interacts with PAK1. Interacts (via C-terminus) with Ras-related Rab-5 proteins. Interacts (via C-terminus) with Ras-related Rap-2 proteins. Interacts with PIK3CA and PIK3R1. Interacts (via N-terminus) with FSCN1; this interaction induces neuron axon development. Interacts with DBN1. Interacts (via the second coiled coil) with GTP-, but not GDP-bound ARL8A and ARL8B. Interacts with dynactin/DCTN1 and the dynein intermediate chain DYNC1I1/2. Directly interacts with DYNC1LI1. Phosphorylated by PAK1. Isoform 1 is partially phosphorylated. Expressed in brain (at protein level).

It localises to the cytoplasm. Its subcellular location is the endomembrane system. The protein localises to the cell projection. It is found in the invadopodium. The protein resides in the growth cone. It localises to the perikaryon. Its subcellular location is the filopodium. The protein localises to the lamellipodium. It is found in the lysosome. In terms of biological role, ARL8 effector that promotes the coupling of endolysosomes to dynein-dynactin for retrograde transport along microtubules. Acts by binding both GTP-bound ARL8 and dynein-dynactin. In nonneuronal cells, promotes concentration of endolysosomes in the juxtanuclear area. In hippocampal neurons, drives retrograde transport of endolysosomes from the axon to the soma. Plays a role in the generation of neuronal polarity formation and axon growth. Implicated in the formation of a single axon by developing neurons. May inhibit the formation of additional axons by inhibition of PI3K in minor neuronal processes. Plays a role in the formation of F-actin-enriched protrusive structures at the cell periphery. Plays a role in cytoskeletal organization by regulating the subcellular localization of FSCN1 and DBN1 at axonal growth cones. The polypeptide is Protein RUFY3 (Mus musculus (Mouse)).